Reading from the N-terminus, the 209-residue chain is 3-demethoxyubiquinol 3-hydroxylase (209 aa).

Fe cation is bound by residues Glu-58, Glu-88, His-91, Glu-140, Glu-172, and His-175.

This sequence belongs to the COQ7 family. Fe cation serves as cofactor.

Its subcellular location is the cell membrane. The catalysed reaction is a 5-methoxy-2-methyl-3-(all-trans-polyprenyl)benzene-1,4-diol + AH2 + O2 = a 3-demethylubiquinol + A + H2O. The protein operates within cofactor biosynthesis; ubiquinone biosynthesis. Its function is as follows. Catalyzes the hydroxylation of 2-nonaprenyl-3-methyl-6-methoxy-1,4-benzoquinol during ubiquinone biosynthesis. This chain is 3-demethoxyubiquinol 3-hydroxylase, found in Polaromonas sp. (strain JS666 / ATCC BAA-500).